We begin with the raw amino-acid sequence, 133 residues long: Large ribosomal subunit protein uL22 (133 aa).

This sequence belongs to the universal ribosomal protein uL22 family. In terms of assembly, part of the 50S ribosomal subunit.

This protein binds specifically to 23S rRNA; its binding is stimulated by other ribosomal proteins, e.g. L4, L17, and L20. It is important during the early stages of 50S assembly. It makes multiple contacts with different domains of the 23S rRNA in the assembled 50S subunit and ribosome. In terms of biological role, the globular domain of the protein is located near the polypeptide exit tunnel on the outside of the subunit, while an extended beta-hairpin is found that lines the wall of the exit tunnel in the center of the 70S ribosome. In Borrelia garinii subsp. bavariensis (strain ATCC BAA-2496 / DSM 23469 / PBi) (Borreliella bavariensis), this protein is Large ribosomal subunit protein uL22.